A 201-amino-acid chain; its full sequence is Peptidyl-tRNA hydrolase (201 aa).

Position 17 (tyrosine 17) interacts with tRNA. Residue histidine 22 is the Proton acceptor of the active site. The tRNA site is built by phenylalanine 76, asparagine 78, and asparagine 124.

The protein belongs to the PTH family. As to quaternary structure, monomer.

The protein resides in the cytoplasm. It carries out the reaction an N-acyl-L-alpha-aminoacyl-tRNA + H2O = an N-acyl-L-amino acid + a tRNA + H(+). Functionally, hydrolyzes ribosome-free peptidyl-tRNAs (with 1 or more amino acids incorporated), which drop off the ribosome during protein synthesis, or as a result of ribosome stalling. Catalyzes the release of premature peptidyl moieties from peptidyl-tRNA molecules trapped in stalled 50S ribosomal subunits, and thus maintains levels of free tRNAs and 50S ribosomes. The protein is Peptidyl-tRNA hydrolase of Oleidesulfovibrio alaskensis (strain ATCC BAA-1058 / DSM 17464 / G20) (Desulfovibrio alaskensis).